Here is a 62-residue protein sequence, read N- to C-terminus: Conotoxin Im5.1 (62 aa).

The first 19 residues, 1–19, serve as a signal peptide directing secretion; it reads MYCLPVFIILLLLISSAPS. A propeptide spanning residues 20 to 48 is cleaved from the precursor; sequence TPPQPRNKDRVHLISLLDNHKQILQRDWN. Trp60 bears the Tryptophan amide mark.

Belongs to the conotoxin T superfamily. Contains 2 disulfide bonds that can be either 'C1-C3, C2-C4' or 'C1-C4, C2-C3', since these disulfide connectivities have been observed for conotoxins with cysteine framework V (for examples, see AC P0DQQ7 and AC P81755). In terms of tissue distribution, expressed by the venom duct.

The protein resides in the secreted. The protein is Conotoxin Im5.1 of Conus imperialis (Imperial cone).